We begin with the raw amino-acid sequence, 308 residues long: MKTVPAMLVTPRSFREFFILLLGLWSILCKEPTKRIGEECRVQLKIKRNSSRSAWTGELFKIECPVTYCVHRPNVTWCKHNGTRCVPLEVGPQLHTSWVENDQASAFVLYFEPIHLSDDGVYTCSANLNSEVINSHSVVIHVTERTQNCSEHPLITASDIPDATNASRPSTMEERPGRTWLLYALLPLGTSLLLLACVCLLCFLRRIQGKEKKPSDLAGRERETNLVDIPVSSRTNSQILTSETGIYDNDPWSSRLGESESTISSQLEGNKQGIVYASLNHCVIGRTPRQASKIQEAPTEYASICVRS.

The signal sequence occupies residues 1–29 (MKTVPAMLVTPRSFREFFILLLGLWSILC). Over 30–183 (KEPTKRIGEE…ERPGRTWLLY (154 aa)) the chain is Extracellular. Residues 32–134 (PTKRIGEECR…SANLNSEVIN (103 aa)) form the Ig-like V-type domain. Intrachain disulfides connect Cys-40-Cys-69, Cys-64-Cys-124, and Cys-78-Cys-85. Asn-49, Asn-74, Asn-81, Asn-148, and Asn-165 each carry an N-linked (GlcNAc...) asparagine glycan. The chain crosses the membrane as a helical span at residues 184 to 204 (ALLPLGTSLLLLACVCLLCFL). Residues 205–308 (RRIQGKEKKP…TEYASICVRS (104 aa)) lie on the Cytoplasmic side of the membrane.

As to quaternary structure, interacts with tyrosine phosphatases PTPN6/SHP-1 and PTPN11/SHP-2. Interacts with TNFRSF14/HVEM (via cysteine-rich domain 1). Phosphorylated on Tyr residues by TNFRSF14 and by antigen receptors cross-linking, both inducing association with PTPN6 and PTPN11. Post-translationally, N-glycosylated.

The protein resides in the cell membrane. Inhibitory receptor on lymphocytes that negatively regulates antigen receptor signaling via PTPN6/SHP-1 and PTPN11/SHP-2. May interact in cis (on the same cell) or in trans (on other cells) with TNFRSF14. In cis interactions, appears to play an immune regulatory role inhibiting in trans interactions in naive T cells to maintain a resting state. In trans interactions, can predominate during adaptive immune response to provide survival signals to effector T cells. The sequence is that of B- and T-lymphocyte attenuator from Rattus norvegicus (Rat).